The primary structure comprises 281 residues: Probable endonuclease 4 (281 aa).

9 residues coordinate Zn(2+): His-78, His-118, Glu-149, Asp-181, His-184, His-216, Asp-229, His-231, and Glu-260.

This sequence belongs to the AP endonuclease 2 family. The cofactor is Zn(2+).

It carries out the reaction Endonucleolytic cleavage to 5'-phosphooligonucleotide end-products.. Endonuclease IV plays a role in DNA repair. It cleaves phosphodiester bonds at apurinic or apyrimidinic (AP) sites, generating a 3'-hydroxyl group and a 5'-terminal sugar phosphate. This is Probable endonuclease 4 from Thermoplasma acidophilum (strain ATCC 25905 / DSM 1728 / JCM 9062 / NBRC 15155 / AMRC-C165).